We begin with the raw amino-acid sequence, 357 residues long: Non-structural protein NS2 (357 aa).

Disordered regions lie at residues 163-199 (NERE…AREM) and 228-267 (LDEK…PKTH). Composition is skewed to acidic residues over residues 230–241 (EKDEEDGDERED) and 250–260 (DDDEQGEDASD).

This sequence belongs to the orbivirus non-structural protein NS2 family.

Its function is as follows. Single-stranded RNA-binding protein. This Antilocapra americana (Pronghorn) protein is Non-structural protein NS2 (Segment-8).